Consider the following 131-residue polypeptide: Arsenate reductase 1 (131 aa).

Catalysis depends on nucleophile residues Cys-10, Cys-82, and Cys-89. Cystine bridges form between Cys-10-Cys-82 and Cys-82-Cys-89.

This sequence belongs to the low molecular weight phosphotyrosine protein phosphatase family. Thioredoxin-coupled ArsC subfamily.

It is found in the cytoplasm. The enzyme catalyses arsenate + [thioredoxin]-dithiol + H(+) = arsenite + [thioredoxin]-disulfide + H2O. Functionally, catalyzes the reduction of arsenate [As(V)] to arsenite [As(III)]. The sequence is that of Arsenate reductase 1 from Staphylococcus saprophyticus subsp. saprophyticus (strain ATCC 15305 / DSM 20229 / NCIMB 8711 / NCTC 7292 / S-41).